Consider the following 352-residue polypeptide: Selenide, water dikinase (352 aa).

Cys23 is an active-site residue. ATP contacts are provided by residues Lys26 and 54–56; that span reads SRD. Position 57 (Asp57) interacts with Mg(2+). ATP is bound by residues Asp74, Asp97, and 145-147; that span reads GHS. Asp97 contributes to the Mg(2+) binding site. Asp233 contributes to the Mg(2+) binding site.

The protein belongs to the selenophosphate synthase 1 family. Class I subfamily. In terms of assembly, homodimer. The cofactor is Mg(2+).

The enzyme catalyses hydrogenselenide + ATP + H2O = selenophosphate + AMP + phosphate + 2 H(+). Its function is as follows. Synthesizes selenophosphate from selenide and ATP. In Shewanella putrefaciens (strain CN-32 / ATCC BAA-453), this protein is Selenide, water dikinase.